The sequence spans 526 residues: Peptide chain release factor 3 (526 aa).

Residues N9 to Q277 form the tr-type G domain. Residues S18–T25, D86–H90, and N140–D143 each bind GTP.

Belongs to the TRAFAC class translation factor GTPase superfamily. Classic translation factor GTPase family. PrfC subfamily.

Its subcellular location is the cytoplasm. Increases the formation of ribosomal termination complexes and stimulates activities of RF-1 and RF-2. It binds guanine nucleotides and has strong preference for UGA stop codons. It may interact directly with the ribosome. The stimulation of RF-1 and RF-2 is significantly reduced by GTP and GDP, but not by GMP. The protein is Peptide chain release factor 3 of Legionella pneumophila (strain Lens).